The chain runs to 323 residues: Cyclin-dependent kinase 1 (323 aa).

Residues 4–306 (YQKIEKIGEG…AKQACMHPYF (303 aa)) enclose the Protein kinase domain. ATP-binding positions include 10 to 18 (IGEGTYGVV) and lysine 34. Threonine 14 carries the phosphothreonine modification. The residue at position 15 (tyrosine 15) is a Phosphotyrosine. Aspartate 147 (proton acceptor) is an active-site residue. At threonine 180 the chain carries Phosphothreonine; by CAK.

Belongs to the protein kinase superfamily. CMGC Ser/Thr protein kinase family. CDC2/CDKX subfamily. Forms a stable but non-covalent complex with a regulatory subunit (SUC1) and with a cyclin.

The enzyme catalyses L-seryl-[protein] + ATP = O-phospho-L-seryl-[protein] + ADP + H(+). The catalysed reaction is L-threonyl-[protein] + ATP = O-phospho-L-threonyl-[protein] + ADP + H(+). With respect to regulation, phosphorylation at Thr-14 or Tyr-15 inactivates the enzyme, while phosphorylation at Thr-180 activates it. Functionally, cyclin-dependent kinase that acts as a master regulator of the mitotic and meiotic cell cycles. In Emericella nidulans (strain FGSC A4 / ATCC 38163 / CBS 112.46 / NRRL 194 / M139) (Aspergillus nidulans), this protein is Cyclin-dependent kinase 1.